The chain runs to 235 residues: Large ribosomal subunit protein uL1 (235 aa).

Belongs to the universal ribosomal protein uL1 family. As to quaternary structure, part of the 50S ribosomal subunit.

Its function is as follows. Binds directly to 23S rRNA. The L1 stalk is quite mobile in the ribosome, and is involved in E site tRNA release. Protein L1 is also a translational repressor protein, it controls the translation of the L11 operon by binding to its mRNA. The sequence is that of Large ribosomal subunit protein uL1 from Prochlorococcus marinus (strain MIT 9301).